The sequence spans 369 residues: Chorismate synthase (369 aa).

Positions 48 and 54 each coordinate NADP(+). Residues 125 to 127 (RSS), 238 to 239 (NA), G283, 298 to 302 (KPTSS), and R324 each bind FMN.

Belongs to the chorismate synthase family. Homotetramer. It depends on FMNH2 as a cofactor.

It carries out the reaction 5-O-(1-carboxyvinyl)-3-phosphoshikimate = chorismate + phosphate. The protein operates within metabolic intermediate biosynthesis; chorismate biosynthesis; chorismate from D-erythrose 4-phosphate and phosphoenolpyruvate: step 7/7. Functionally, catalyzes the anti-1,4-elimination of the C-3 phosphate and the C-6 proR hydrogen from 5-enolpyruvylshikimate-3-phosphate (EPSP) to yield chorismate, which is the branch point compound that serves as the starting substrate for the three terminal pathways of aromatic amino acid biosynthesis. This reaction introduces a second double bond into the aromatic ring system. The polypeptide is Chorismate synthase (Acidiphilium cryptum (strain JF-5)).